The following is a 784-amino-acid chain: SWI/SNF complex subunit SWI3C homolog (784 aa).

Polar residues predominate over residues 1–10; the sequence is MPRKASSTSD. A disordered region spans residues 1-68; sequence MPRKASSTSD…PEDADDETLA (68 aa). Over residues 24–39 the composition is skewed to low complexity; it reads ASPSPSNRSSAAAAAA. A compositionally biased stretch (acidic residues) spans 43–66; that stretch reads DDSDSAAVNEDDDSAVPEDADDET. The SWIRM domain maps to 185–284; the sequence is HVVPKHSDWF…YLASGSVHRG (100 aa). The segment at 355–409 adopts a ZZ-type; degenerate zinc-finger fold; it reads LSESSCSYCLQPLTSLHYQSLKEADIALCSDCFHDARYITGHSSLDFQRIDGDND. Zn(2+) is bound by residues Cys360, Cys363, Cys383, and Cys386. One can recognise an SANT domain in the interval 413–464; it reads NDGDSWTDQETLLLLEGIEKYNDNWNNIAEHVGTKSKAQCIYHFIRLPVEDG. 2 disordered regions span residues 667 to 702 and 760 to 784; these read LASPGNSLPGGSTSTMSSNPMSMSPRPMGVPGSMPQ and GMPNSVTPNHHQLLRSSSGNNSSVG. The segment covering 675 to 695 has biased composition (low complexity); sequence PGGSTSTMSSNPMSMSPRPMG.

In terms of assembly, interacts with LFR. Interacts with NMCP1.

Its subcellular location is the nucleus. The protein resides in the nucleoplasm. Its function is as follows. Component of a multiprotein complex equivalent of the SWI/SNF complex, an ATP-dependent chromatin-remodeling complex, which is required for the positive and negative regulation of gene expression of a large number of genes. It changes chromatin structure by altering DNA-histone contacts within a nucleosome, leading eventually to a change in nucleosome position, thus facilitating or repressing binding of gene-specific transcription factors. May be involved in positive response to drought stress and modulation of root growth through its interaction with NMCP1. The chain is SWI/SNF complex subunit SWI3C homolog from Oryza sativa subsp. japonica (Rice).